Here is a 1546-residue protein sequence, read N- to C-terminus: MAPTPLPLEQMSGVGGYLPAGQEGGPRINTMSMSMLIDFIIQRTYHELTVLAELLPRKTDMERKIEIYNYAARTRHLFTRLNALVKWGNSVSKVDKSSQIMSFLDKQNMLFVETADMLARMSRETLVRARLPNFHIPAAVEVLTTGTYNRLPTCIRERIVPADAITPAEKKQTLLRLNQVIQHRLVTGKLLPQMREFRIKNGRVTFEVKHEFSVALTVMGDSQNVPWRLLDIDVLVEDKETGDGKSLVHPLQVNYIHQLIQARLVENPNALSEVYNCLHYFCQSLQLEVLYTQTLRLNYERLDDNNITVEEYVPGVKLTVSYWRDLKSELGYRLTVQSDPSEIGRPLAVVHVPSLGAKESAEVADRAVRSEHLSMERLIVHTVYIRSVSRLSDLKLEFQAFLKDVDFNLQGTPAILTVPVLSPCLRAEQIHITIDTHTGMFRCHVPKHLDCPITDEMQEALNGDRSKLPSLLSELRYWITHRRCEKTLQHLPATATDTLTFLTQPEQELLQQGRHKIYVKLHRHPNIILVVQLKEKSTMANEMEYTFHLGFVAFQKDEADVIDDSAKQLVSVVAQPPSDIPKFFTKLMRLIEFDTFVATHGPGTEVDAEVSPHKRKSTGDILAPPAKQQKTIFPAYFIPELAHVVAMCDEKIPFMNLAQTLSKHNIPHSGLQVEANATSLVLKILALPQPGKSATAAGQQPQQGAASAAGTAPPSGSSAFPRIEPHVWDDLMRRVLSISVRSQTNKNSQVRIWVVEFVFYSTPLQSCHPKEQGSRRTVYLTYEQANHDFSKTVEELLNDWSKIVYLYTLVYDFAEQLRNKRLALCDMLVVKSYSYMNLLLGYGPKKEVSCNIYWSVQSHGFRLTFVGGMSAVNAHSMMRDQLAQHLNQQHSLTQIAQILHETYNPMSSIAKLPVLPFLGIPRPQVPVLSFCMLAQSPCLMRLTYQAVYCLELRFRANRLVSIRDGASSRFERNVIEEFTPIQGLKAFLSKYVDESAAYRGRAPHEDDNPLSPIGMEDNYGGPSSVTGVSAGGSSPFLGAGMRGPQSPRDSGLRFPAPHTPPSSSNPHTPASPHPSAGGGGAAQSHGNFNLTSPPAPHMPHPSPGGLMPSSPLNPQPSPHMVHSPGPNTLYMQSHQDSPFTAMSPANNQWPGSPSMPRPSPRPGQSPEHKSTGGSVVTGGPDRGGSRGTLNRPWAGAVPTLLTHEALETLCRPSPHPNKDINVTDMSPLERFLGCVYMRRQLHRNIQNEESLTALNSTEPGVVLFKVDGLQCQVMLNQMHMQTLHLKITQLPPPPDKPTFQLSPDDLLVIEQYFDTRVAAPPYRPNSLHSICRLLNLPAQVLKDFVQIMRLELKPEFGGDQLKWTVQMCMRMPPSAVPIVPSGNACVVLGRMKILFFLQITKIPFNGKDWKDSPSLVLPIVYDITMNLTQMAERREQVPSPMMTAASTLLRRFSEFNSQQNQCSLFPAITDLLTNLQLATDMPQPPPNQAIGPPVGVGVGVGVGIGVVGSSPNPMMPMQQLQPQVGPQGQVGPGGYPQLGPNPGGPQ.

Short sequence motifs (LXXLL motif) lie at residues 51–55 (LAELL) and 468–472 (LPSLL). 3 disordered regions span residues 692 to 717 (KSAT…PSGS), 1000 to 1193 (GRAP…NRPW), and 1512 to 1546 (NPMM…GGPQ). Composition is skewed to low complexity over residues 693–717 (SATA…PSGS), 1020–1035 (GGPS…GSSP), and 1061–1075 (PSSS…PHPS). Over residues 1093-1102 (PPAPHMPHPS) the composition is skewed to pro residues. Polar residues predominate over residues 1125 to 1149 (GPNTLYMQSHQDSPFTAMSPANNQW). Positions 1153–1163 (PSMPRPSPRPG) are enriched in pro residues. The span at 1515–1527 (MPMQQLQPQVGPQ) shows a compositional bias: low complexity.

It belongs to the Mediator complex subunit 14 family. As to quaternary structure, component of the Mediator complex.

The protein localises to the nucleus. Functionally, component of the Mediator complex, a coactivator involved in the regulated transcription of nearly all RNA polymerase II-dependent genes. Mediator functions as a bridge to convey information from gene-specific regulatory proteins to the basal RNA polymerase II transcription machinery. Mediator is recruited to promoters by direct interactions with regulatory proteins and serves as a scaffold for the assembly of a functional preinitiation complex with RNA polymerase II and the general transcription factors. The protein is Mediator of RNA polymerase II transcription subunit 14 (MED14) of Drosophila pseudoobscura pseudoobscura (Fruit fly).